A 150-amino-acid polypeptide reads, in one-letter code: Flagellar assembly factor FliW (150 aa).

The protein belongs to the FliW family. As to quaternary structure, interacts with translational regulator CsrA and flagellin(s).

The protein localises to the cytoplasm. Functionally, acts as an anti-CsrA protein, binds CsrA and prevents it from repressing translation of its target genes, one of which is flagellin. Binds to flagellin and participates in the assembly of the flagellum. This chain is Flagellar assembly factor FliW, found in Leptospira borgpetersenii serovar Hardjo-bovis (strain JB197).